The primary structure comprises 103 residues: Small ubiquitin-related modifier 3 (103 aa).

Residues Lys-5 and Lys-7 each participate in a glycyl lysine isopeptide (Lys-Gly) (interchain with G-Cter in SUMO2) cross-link. Lys-11 is covalently cross-linked (Glycyl lysine isopeptide (Lys-Gly) (interchain with G-Cter in SUMO); alternate). Residue Lys-11 forms a Glycyl lysine isopeptide (Lys-Gly) (interchain with G-Cter in SUMO2); alternate linkage. The Ubiquitin-like domain occupies Asp-15–Gly-92. Residue Gly-92 forms a Glycyl lysine isopeptide (Gly-Lys) (interchain with K-? in acceptor proteins) linkage. Positions Val-93–Phe-103 are excised as a propeptide.

It belongs to the ubiquitin family. SUMO subfamily. In terms of assembly, covalently attached to a number of proteins. Interacts with BMAL1. Interacts with USP25 (via ts SIM domain); the interaction sumoylates USP25 and inhibits its ubiquitin hydrolyzing activity. Interacts with SAE2 and UBE2I. Post-translationally, polymeric chains can be formed through Lys-11 cross-linking. In terms of processing, cleavage of precursor form by SENP1, SENP2 or SENP5 is necessary for function. As to expression, expressed predominantly in liver.

It localises to the cytoplasm. The protein resides in the nucleus. Its subcellular location is the PML body. In terms of biological role, ubiquitin-like protein which can be covalently attached to target lysines either as a monomer or as a lysine-linked polymer. Does not seem to be involved in protein degradation and may function as an antagonist of ubiquitin in the degradation process. Plays a role in a number of cellular processes such as nuclear transport, DNA replication and repair, mitosis and signal transduction. Covalent attachment to its substrates requires prior activation by the E1 complex SAE1-SAE2 and linkage to the E2 enzyme UBE2I, and can be promoted by an E3 ligase such as PIAS1-4, RANBP2 or CBX4. Plays a role in the regulation of sumoylation status of SETX. The protein is Small ubiquitin-related modifier 3 of Homo sapiens (Human).